Here is a 159-residue protein sequence, read N- to C-terminus: Aphid transmission protein (159 aa).

The protein belongs to the caulimoviridae ORF II family.

This protein is involved in virus transmission. The chain is Aphid transmission protein from Cauliflower mosaic virus (strain PV147) (CaMV).